The chain runs to 201 residues: Retinol-binding protein 4 (201 aa).

A signal peptide spans 1–18; sequence MEWVWALVLLAALGSGRG. 3 disulfides stabilise this stretch: C22–C178, C88–C192, and C138–C147. Residue Q116 coordinates substrate. Residue R139 is modified to Omega-N-methylarginine.

It belongs to the calycin superfamily. Lipocalin family. As to quaternary structure, interacts with TTR. Interaction with TTR prevents its loss by filtration through the kidney glomeruli. Interacts with STRA6.

It localises to the secreted. Its function is as follows. Retinol-binding protein that mediates retinol transport in blood plasma. Delivers retinol from the liver stores to the peripheral tissues. Transfers the bound all-trans retinol to STRA6, that then facilitates retinol transport across the cell membrane. The sequence is that of Retinol-binding protein 4 (RBP4) from Oryctolagus cuniculus (Rabbit).